The sequence spans 390 residues: Queuine tRNA-ribosyltransferase (390 aa).

Aspartate 90 serves as the catalytic Proton acceptor. Substrate is bound by residues 90–94 (DSGGF), aspartate 144, glutamine 197, and glycine 224. Residues 255-261 (GVGTPED) are RNA binding. Aspartate 274 functions as the Nucleophile in the catalytic mechanism. The interval 279–283 (TRNAR) is RNA binding; important for wobble base 34 recognition. 4 residues coordinate Zn(2+): cysteine 312, cysteine 314, cysteine 317, and histidine 354.

It belongs to the queuine tRNA-ribosyltransferase family. Homodimer. Within each dimer, one monomer is responsible for RNA recognition and catalysis, while the other monomer binds to the replacement base PreQ1. Zn(2+) serves as cofactor.

It catalyses the reaction 7-aminomethyl-7-carbaguanine + guanosine(34) in tRNA = 7-aminomethyl-7-carbaguanosine(34) in tRNA + guanine. Its pathway is tRNA modification; tRNA-queuosine biosynthesis. Its function is as follows. Catalyzes the base-exchange of a guanine (G) residue with the queuine precursor 7-aminomethyl-7-deazaguanine (PreQ1) at position 34 (anticodon wobble position) in tRNAs with GU(N) anticodons (tRNA-Asp, -Asn, -His and -Tyr). Catalysis occurs through a double-displacement mechanism. The nucleophile active site attacks the C1' of nucleotide 34 to detach the guanine base from the RNA, forming a covalent enzyme-RNA intermediate. The proton acceptor active site deprotonates the incoming PreQ1, allowing a nucleophilic attack on the C1' of the ribose to form the product. After dissociation, two additional enzymatic reactions on the tRNA convert PreQ1 to queuine (Q), resulting in the hypermodified nucleoside queuosine (7-(((4,5-cis-dihydroxy-2-cyclopenten-1-yl)amino)methyl)-7-deazaguanosine). The polypeptide is Queuine tRNA-ribosyltransferase (Leptothrix cholodnii (strain ATCC 51168 / LMG 8142 / SP-6) (Leptothrix discophora (strain SP-6))).